The sequence spans 803 residues: Subtilisin-like protease SBT5.5 (803 aa).

A signal peptide spans 1-22 (MKRIFGIFIFLSLLLFLVPLLA). A propeptide spans 23-112 (SCTKEKQVYI…KSDPRKYKIH (90 aa)) (activation peptide). One can recognise an Inhibitor I9 domain in the interval 30 to 108 (VYIVYFGEHK…VSVFKSDPRK (79 aa)). The region spanning 140–656 (KYDVNDRFRV…SRHFRPTKAA (517 aa)) is the Peptidase S8 domain. The active-site Charge relay system is Asp169. Asn202 carries N-linked (GlcNAc...) asparagine glycosylation. His244 serves as the catalytic Charge relay system. Residues 409-504 (YAPLVYAPDV…VFSSTVDRIL (96 aa)) enclose the PA domain. Ser589 serves as the catalytic Charge relay system. Asn725 carries N-linked (GlcNAc...) asparagine glycosylation.

This sequence belongs to the peptidase S8 family.

Its subcellular location is the secreted. This is Subtilisin-like protease SBT5.5 from Arabidopsis thaliana (Mouse-ear cress).